Reading from the N-terminus, the 102-residue chain is Small ribosomal subunit protein uS10 (102 aa).

This sequence belongs to the universal ribosomal protein uS10 family. In terms of assembly, part of the 30S ribosomal subunit.

In terms of biological role, involved in the binding of tRNA to the ribosomes. This Enterococcus faecalis (strain ATCC 700802 / V583) protein is Small ribosomal subunit protein uS10.